The primary structure comprises 180 residues: MKIKKTAGRQPAPNRINEEITGVPEVRLTGIDGEAIGVVSIRDAQNLADEAGVDLVEISPNAEPPVCRIMDYGKFLFDKAKSAKEQKKKQKQVQVKEIKFRPGTDENDYQVKLRNLIRFLEDGDKAKITLRFRGREMAHQNLGMDLLNRIKADLDEYAVVESFPKMEGRQAIMVLAPKKK.

Belongs to the IF-3 family. In terms of assembly, monomer.

Its subcellular location is the cytoplasm. IF-3 binds to the 30S ribosomal subunit and shifts the equilibrium between 70S ribosomes and their 50S and 30S subunits in favor of the free subunits, thus enhancing the availability of 30S subunits on which protein synthesis initiation begins. The polypeptide is Translation initiation factor IF-3 (Shewanella baltica (strain OS223)).